A 386-amino-acid chain; its full sequence is Succinate--CoA ligase [ADP-forming] subunit beta (386 aa).

The 236-residue stretch at 9–244 (KQVLRSSNLN…DSQIDAKEAA (236 aa)) folds into the ATP-grasp domain. ATP contacts are provided by residues Lys-46, 53–55 (GRG), Glu-99, Leu-102, and Glu-107. The Mg(2+) site is built by Asn-199 and Asp-213. Residues Asn-264 and 321 to 323 (GIV) each bind substrate.

This sequence belongs to the succinate/malate CoA ligase beta subunit family. In terms of assembly, heterotetramer of two alpha and two beta subunits. It depends on Mg(2+) as a cofactor.

It catalyses the reaction succinate + ATP + CoA = succinyl-CoA + ADP + phosphate. The enzyme catalyses GTP + succinate + CoA = succinyl-CoA + GDP + phosphate. The protein operates within carbohydrate metabolism; tricarboxylic acid cycle; succinate from succinyl-CoA (ligase route): step 1/1. In terms of biological role, succinyl-CoA synthetase functions in the citric acid cycle (TCA), coupling the hydrolysis of succinyl-CoA to the synthesis of either ATP or GTP and thus represents the only step of substrate-level phosphorylation in the TCA. The beta subunit provides nucleotide specificity of the enzyme and binds the substrate succinate, while the binding sites for coenzyme A and phosphate are found in the alpha subunit. This Thiobacillus denitrificans (strain ATCC 25259 / T1) protein is Succinate--CoA ligase [ADP-forming] subunit beta.